The chain runs to 189 residues: Segregation and condensation protein B (189 aa).

It belongs to the ScpB family. In terms of assembly, homodimer. Homodimerization may be required to stabilize the binding of ScpA to the Smc head domains. Component of a cohesin-like complex composed of ScpA, ScpB and the Smc homodimer, in which ScpA and ScpB bind to the head domain of Smc. The presence of the three proteins is required for the association of the complex with DNA.

The protein localises to the cytoplasm. Its function is as follows. Participates in chromosomal partition during cell division. May act via the formation of a condensin-like complex containing Smc and ScpA that pull DNA away from mid-cell into both cell halves. This chain is Segregation and condensation protein B, found in Lachnoclostridium phytofermentans (strain ATCC 700394 / DSM 18823 / ISDg) (Clostridium phytofermentans).